Consider the following 379-residue polypeptide: Mannitol-1-phosphate 5-dehydrogenase (379 aa).

3-14 (ALHFGAGNIGRG) serves as a coordination point for NAD(+).

Belongs to the mannitol dehydrogenase family.

The catalysed reaction is D-mannitol 1-phosphate + NAD(+) = beta-D-fructose 6-phosphate + NADH + H(+). In Actinobacillus pleuropneumoniae serotype 3 (strain JL03), this protein is Mannitol-1-phosphate 5-dehydrogenase.